A 315-amino-acid chain; its full sequence is tRNA-dihydrouridine(16) synthase (315 aa).

FMN is bound by residues 7-9 (PME) and Gln68. Cys98 (proton donor) is an active-site residue. Residues Lys139, 200 to 202 (NGE), and 224 to 225 (GR) each bind FMN.

The protein belongs to the Dus family. DusC subfamily. Requires FMN as cofactor.

It catalyses the reaction 5,6-dihydrouridine(16) in tRNA + NADP(+) = uridine(16) in tRNA + NADPH + H(+). The enzyme catalyses 5,6-dihydrouridine(16) in tRNA + NAD(+) = uridine(16) in tRNA + NADH + H(+). Its function is as follows. Catalyzes the synthesis of 5,6-dihydrouridine (D), a modified base found in the D-loop of most tRNAs, via the reduction of the C5-C6 double bond in target uridines. DusC specifically modifies U16 in tRNAs. The chain is tRNA-dihydrouridine(16) synthase from Escherichia coli (strain K12).